The following is a 455-amino-acid chain: Bifunctional protein GlmU (455 aa).

Residues 1 to 226 (MSLDIVILAA…AMEVQGANDR (226 aa)) form a pyrophosphorylase region. UDP-N-acetyl-alpha-D-glucosamine-binding positions include 8-11 (LAAG), lysine 22, glutamine 73, 78-79 (GT), 99-101 (YGD), glycine 136, glutamate 151, asparagine 166, and asparagine 224. A Mg(2+)-binding site is contributed by aspartate 101. Asparagine 224 is a Mg(2+) binding site. Positions 227–247 (KQLSELERHYQLREARRLMAA) are linker. Positions 248–455 (GVTLRDPSRF…WKRPVKITKD (208 aa)) are N-acetyltransferase. Residues arginine 330 and lysine 348 each coordinate UDP-N-acetyl-alpha-D-glucosamine. Residue histidine 360 is the Proton acceptor of the active site. Positions 363 and 374 each coordinate UDP-N-acetyl-alpha-D-glucosamine. Acetyl-CoA is bound by residues alanine 377, 383 to 384 (NY), serine 402, alanine 420, and arginine 437.

In the N-terminal section; belongs to the N-acetylglucosamine-1-phosphate uridyltransferase family. The protein in the C-terminal section; belongs to the transferase hexapeptide repeat family. Homotrimer. The cofactor is Mg(2+).

It localises to the cytoplasm. The catalysed reaction is alpha-D-glucosamine 1-phosphate + acetyl-CoA = N-acetyl-alpha-D-glucosamine 1-phosphate + CoA + H(+). It catalyses the reaction N-acetyl-alpha-D-glucosamine 1-phosphate + UTP + H(+) = UDP-N-acetyl-alpha-D-glucosamine + diphosphate. It participates in nucleotide-sugar biosynthesis; UDP-N-acetyl-alpha-D-glucosamine biosynthesis; N-acetyl-alpha-D-glucosamine 1-phosphate from alpha-D-glucosamine 6-phosphate (route II): step 2/2. Its pathway is nucleotide-sugar biosynthesis; UDP-N-acetyl-alpha-D-glucosamine biosynthesis; UDP-N-acetyl-alpha-D-glucosamine from N-acetyl-alpha-D-glucosamine 1-phosphate: step 1/1. The protein operates within bacterial outer membrane biogenesis; LPS lipid A biosynthesis. Its function is as follows. Catalyzes the last two sequential reactions in the de novo biosynthetic pathway for UDP-N-acetylglucosamine (UDP-GlcNAc). The C-terminal domain catalyzes the transfer of acetyl group from acetyl coenzyme A to glucosamine-1-phosphate (GlcN-1-P) to produce N-acetylglucosamine-1-phosphate (GlcNAc-1-P), which is converted into UDP-GlcNAc by the transfer of uridine 5-monophosphate (from uridine 5-triphosphate), a reaction catalyzed by the N-terminal domain. This is Bifunctional protein GlmU from Pseudomonas syringae pv. tomato (strain ATCC BAA-871 / DC3000).